The following is a 50-amino-acid chain: Small ribosomal subunit protein uS14 (50 aa).

Cys15, Cys18, Cys33, and Cys36 together coordinate Zn(2+).

Belongs to the universal ribosomal protein uS14 family. Zinc-binding uS14 subfamily. In terms of assembly, part of the 30S ribosomal subunit. Requires Zn(2+) as cofactor.

Its function is as follows. Binds 16S rRNA, required for the assembly of 30S particles. This Methanococcoides burtonii (strain DSM 6242 / NBRC 107633 / OCM 468 / ACE-M) protein is Small ribosomal subunit protein uS14.